The chain runs to 341 residues: 1-aminocyclopropane-1-carboxylate deaminase (341 aa).

Residue Ser-1 is modified to N-acetylserine. Lys-51 carries the N6-(pyridoxal phosphate)lysine modification. Ser-78 serves as the catalytic Nucleophile.

The protein belongs to the ACC deaminase/D-cysteine desulfhydrase family. Homodimer. Requires pyridoxal 5'-phosphate as cofactor.

The enzyme catalyses 1-aminocyclopropane-1-carboxylate + H2O = 2-oxobutanoate + NH4(+). Functionally, catalyzes a cyclopropane ring-opening reaction, the irreversible conversion of 1-aminocyclopropane-1-carboxylate (ACC) to ammonia and alpha-ketobutyrate. The sequence is that of 1-aminocyclopropane-1-carboxylate deaminase from Cyberlindnera saturnus (Yeast).